The following is a 236-amino-acid chain: Proteasome subunit beta type-1 (236 aa).

The protein belongs to the peptidase T1B family. As to quaternary structure, the 26S proteasome consists of a 20S proteasome core and two 19S regulatory subunits. The 20S proteasome core is composed of 28 subunits that are arranged in four stacked rings, resulting in a barrel-shaped structure. The two end rings are each formed by seven alpha subunits, and the two central rings are each formed by seven beta subunits. The catalytic chamber with the active sites is on the inside of the barrel.

It localises to the cytoplasm. It is found in the nucleus. In terms of biological role, non-catalytic component of the proteasome, a multicatalytic proteinase complex which is characterized by its ability to cleave peptides with Arg, Phe, Tyr, Leu, and Glu adjacent to the leaving group at neutral or slightly basic pH. The proteasome has an ATP-dependent proteolytic activity. In Dictyostelium discoideum (Social amoeba), this protein is Proteasome subunit beta type-1 (psmB1).